The primary structure comprises 687 residues: Light-independent protochlorophyllide reductase subunit B (687 aa).

Residue Asp-36 participates in [4Fe-4S] cluster binding. Asp-441 acts as the Proton donor in catalysis. Gly-576–Met-577 provides a ligand contact to substrate.

This sequence belongs to the ChlB/BchB/BchZ family. In terms of assembly, protochlorophyllide reductase is composed of three subunits; ChlL, ChlN and ChlB. Forms a heterotetramer of two ChlB and two ChlN subunits. [4Fe-4S] cluster serves as cofactor.

It is found in the plastid. The protein localises to the chloroplast. It catalyses the reaction chlorophyllide a + oxidized 2[4Fe-4S]-[ferredoxin] + 2 ADP + 2 phosphate = protochlorophyllide a + reduced 2[4Fe-4S]-[ferredoxin] + 2 ATP + 2 H2O. The protein operates within porphyrin-containing compound metabolism; chlorophyll biosynthesis (light-independent). In terms of biological role, component of the dark-operative protochlorophyllide reductase (DPOR) that uses Mg-ATP and reduced ferredoxin to reduce ring D of protochlorophyllide (Pchlide) to form chlorophyllide a (Chlide). This reaction is light-independent. The NB-protein (ChlN-ChlB) is the catalytic component of the complex. The protein is Light-independent protochlorophyllide reductase subunit B of Chlamydomonas reinhardtii (Chlamydomonas smithii).